Consider the following 578-residue polypeptide: Putative multidrug export ATP-binding/permease protein SA1683 (578 aa).

Residues 1 to 15 (MIKRYLQFVKPYKYR) are Cytoplasmic-facing. The helical transmembrane segment at 16 to 36 (IFATIIVGIIKFGIPMLIPLL) threads the bilayer. In terms of domain architecture, ABC transmembrane type-1 spans 16–306 (IFATIIVGII…LVASFTTLTQ (291 aa)). Topologically, residues 37–59 (IKYAIDGVINNHALTTDEKVHHL) are extracellular. A helical membrane pass occupies residues 60-80 (TIAIGIALFIFVIVRPPIEFI). Residues 81 to 138 (RQYLAQWTSNKILYDIRKKLYNHLQALSARFYANNQVGQVISRVINDVEQTKDFILTG) are Cytoplasmic-facing. A helical transmembrane segment spans residues 139–159 (LMNIWLDCITIIIALSIMFFL). Topologically, residues 160-162 (DVK) are extracellular. Residues 163–183 (LTLAALFIFPFYILTVYVFFG) form a helical membrane-spanning segment. At 184–244 (RLRKLTRERS…TRALKHTRWN (61 aa)) the chain is on the cytoplasmic side. Residues 245–263 (AYSFAAINTVTDIGPIIVI) form a helical membrane-spanning segment. Over 264–269 (GVGAYL) the chain is Extracellular. Residues 270–287 (AISGSITVGTLAAFVGYL) form a helical membrane-spanning segment. Residues 288–578 (ELLFGPLRRL…YEHLYSIQNL (291 aa)) are Cytoplasmic-facing. Residues 340 to 575 (IDIDHVSFQY…QGAYEHLYSI (236 aa)) enclose the ABC transporter domain. Residue 374-381 (GMSGGGKS) participates in ATP binding.

It belongs to the ABC transporter superfamily. Homodimer.

It localises to the cell membrane. In terms of biological role, may be involved in multidrug export. Transmembrane domains (TMD) form a pore in the cell membrane and the ATP-binding domain (NBD) is responsible for energy generation. The sequence is that of Putative multidrug export ATP-binding/permease protein SA1683 from Staphylococcus aureus (strain N315).